The primary structure comprises 399 residues: Tryptophan synthase beta chain (399 aa).

Lysine 92 is subject to N6-(pyridoxal phosphate)lysine.

This sequence belongs to the TrpB family. Tetramer of two alpha and two beta chains. Requires pyridoxal 5'-phosphate as cofactor.

It carries out the reaction (1S,2R)-1-C-(indol-3-yl)glycerol 3-phosphate + L-serine = D-glyceraldehyde 3-phosphate + L-tryptophan + H2O. The protein operates within amino-acid biosynthesis; L-tryptophan biosynthesis; L-tryptophan from chorismate: step 5/5. The beta subunit is responsible for the synthesis of L-tryptophan from indole and L-serine. This Bordetella petrii (strain ATCC BAA-461 / DSM 12804 / CCUG 43448) protein is Tryptophan synthase beta chain.